A 470-amino-acid polypeptide reads, in one-letter code: Leucine-rich repeat extensin-like protein 6 (470 aa).

An N-terminal signal peptide occupies residues 1 to 28 (MREDTFFFQWWFLVSGLSFIFLLPQAFT). Residue Asn-83 is glycosylated (N-linked (GlcNAc...) asparagine). LRR repeat units follow at residues 98 to 122 (VLTVAGIDLNHANIAGYLPLELGLL), 123 to 146 (TDLALFHINSNRFQGQLPKTLKCL), 147 to 170 (HLLHELDVSNNKLSGEFPSVIFSL), 171 to 194 (PSLKFLDIRFNEFQGDVPSQLFDL), 196 to 217 (LDALFINDNKFQFRLPRNIGNS), 219 to 241 (VSVLVLANNDLQGSCVPPSFYKM), 243 to 265 (KTLHEIIITNSQLTGCLNREIGL), 266 to 290 (LNQLTVFDVSYNNLVGSLPETIGDM), 291 to 314 (KSLEQLNIAHNKFSGYIPESICRL), and 316 to 337 (RLENFTYSYNFFSGEPPACLRL). N-linked (GlcNAc...) asparagine glycosylation occurs at Asn-319. The tract at residues 378–411 (SPPPPPPPPPPPPPPPPPPPPPPPPPPPPPYVYP) is disordered. The segment at 378-470 (SPPPPPPPPP…CNDLPTPVHY (93 aa)) is contains the Ser-Pro(4) repeats.

Post-translationally, hydroxylated on proline residues in the S-P-P-P-P repeat. In terms of processing, O-glycosylated on hydroxyprolines. In terms of tissue distribution, expressed in roots.

It is found in the secreted. Its subcellular location is the cell wall. In terms of biological role, modulates cell morphogenesis by regulating cell wall formation and assembly, and/or growth polarization. This chain is Leucine-rich repeat extensin-like protein 6 (LRX6), found in Arabidopsis thaliana (Mouse-ear cress).